We begin with the raw amino-acid sequence, 395 residues long: Chaperone protein DnaJ 1 (395 aa).

The 66-residue stretch at aspartate 10–arginine 75 folds into the J domain. The segment at glycine 164–threonine 242 adopts a CR-type zinc-finger fold. Zn(2+)-binding residues include cysteine 177, cysteine 180, cysteine 194, cysteine 197, cysteine 216, cysteine 219, cysteine 230, and cysteine 233. 4 CXXCXGXG motif repeats span residues cysteine 177–glycine 184, cysteine 194–glycine 201, cysteine 216–glycine 223, and cysteine 230–glycine 237.

The protein belongs to the DnaJ family. In terms of assembly, homodimer. Zn(2+) serves as cofactor.

It is found in the cytoplasm. Participates actively in the response to hyperosmotic and heat shock by preventing the aggregation of stress-denatured proteins and by disaggregating proteins, also in an autonomous, DnaK-independent fashion. Unfolded proteins bind initially to DnaJ; upon interaction with the DnaJ-bound protein, DnaK hydrolyzes its bound ATP, resulting in the formation of a stable complex. GrpE releases ADP from DnaK; ATP binding to DnaK triggers the release of the substrate protein, thus completing the reaction cycle. Several rounds of ATP-dependent interactions between DnaJ, DnaK and GrpE are required for fully efficient folding. Also involved, together with DnaK and GrpE, in the DNA replication of plasmids through activation of initiation proteins. In Mycobacterium bovis (strain ATCC BAA-935 / AF2122/97), this protein is Chaperone protein DnaJ 1.